The sequence spans 119 residues: HTH-type transcriptional regulator SarX (119 aa).

The segment at residues 55–78 (LKTAMDELDLSRTKLLVSIRRLIE) is a DNA-binding region (H-T-H motif).

This sequence belongs to the SarA family.

Its subcellular location is the cytoplasm. Its function is as follows. Involved in the regulation of virulence genes. Acts as a repressor of the agr locus and consequently targets genes regulated by the agr system such as sspA, hla and hlb. Binds directly to the agr promoter region. This Staphylococcus aureus (strain USA300) protein is HTH-type transcriptional regulator SarX (sarX).